Consider the following 411-residue polypeptide: Transforming growth factor beta regulator 1 (411 aa).

2 disordered regions span residues 1–29 and 119–146; these read MSLL…PKKS and GPIS…KGKE. Ser-2 is subject to N-acetylserine. Phosphoserine is present on Ser-10. The region spanning 182–241 is the FYR N-terminal domain; it reads VFPIGLGGLTVYSLGEIITDRPGFHDESAIYPVGYCSTRIYASMKCPDQKCLYTCQIKDG. The 80-residue stretch at 242 to 321 folds into the FYR C-terminal domain; the sequence is GVQPQFEIVP…RKCINYQWVK (80 aa).

Belongs to the TBRG1 family. Interacts with CDKN2A and MDM2. Post-translationally, ubiquitinated; mediated by MDM2 and leading to its subsequent proteasomal degradation. In terms of tissue distribution, widely expressed at low levels in most tissues, with highest levels in pancreas, lung and liver. Expression is decreased in primary tumors including lung, liver, breast, pancreas and kidney carcinomas, chronic lymphocytic leukemia and diffuse large B-cell lymphoma.

The protein localises to the nucleus. Its function is as follows. Acts as a growth inhibitor. Can activate p53/TP53, causes G1 arrest and collaborates with CDKN2A to restrict proliferation, but does not require either protein to inhibit DNA synthesis. Redistributes CDKN2A into the nucleoplasm. Involved in maintaining chromosomal stability. This is Transforming growth factor beta regulator 1 (TBRG1) from Homo sapiens (Human).